A 261-amino-acid polypeptide reads, in one-letter code: Kallikrein 1-related peptidase b1 (261 aa).

A signal peptide spans 1-18 (MWFLILFLALSLGGIDAA). A propeptide spans 19–24 (PPVQSR) (activation peptide). The region spanning 25-258 (IVGGFKCEKN…FTSWIKDTLA (234 aa)) is the Peptidase S1 domain. 5 disulfides stabilise this stretch: cysteine 31–cysteine 173, cysteine 50–cysteine 66, cysteine 152–cysteine 219, cysteine 184–cysteine 198, and cysteine 209–cysteine 234. Residue histidine 65 is the Charge relay system of the active site. Asparagine 102 carries N-linked (GlcNAc...) asparagine glycosylation. Aspartate 120 acts as the Charge relay system in catalysis. Serine 213 serves as the catalytic Charge relay system.

It belongs to the peptidase S1 family. Kallikrein subfamily.

It catalyses the reaction Preferential cleavage of Arg-|-Xaa bonds in small molecule substrates. Highly selective action to release kallidin (lysyl-bradykinin) from kininogen involves hydrolysis of Met-|-Xaa or Leu-|-Xaa.. Functionally, glandular kallikreins cleave Met-Lys and Arg-Ser bonds in kininogen to release Lys-bradykinin. The polypeptide is Kallikrein 1-related peptidase b1 (Klk1b1) (Mus musculus (Mouse)).